We begin with the raw amino-acid sequence, 591 residues long: L-fucose isomerase (591 aa).

Residues Glu337 and Asp361 each act as proton acceptor in the active site. Mn(2+) is bound by residues Glu337, Asp361, and His528.

Belongs to the L-fucose isomerase family. Homohexamer. Requires Mn(2+) as cofactor.

Its subcellular location is the cytoplasm. The catalysed reaction is L-fucose = L-fuculose. Its pathway is carbohydrate degradation; L-fucose degradation; L-lactaldehyde and glycerone phosphate from L-fucose: step 1/3. Converts the aldose L-fucose into the corresponding ketose L-fuculose. In Escherichia coli (strain ATCC 8739 / DSM 1576 / NBRC 3972 / NCIMB 8545 / WDCM 00012 / Crooks), this protein is L-fucose isomerase.